The chain runs to 1222 residues: MLFNINEKGEPLVISFAPFLSPEAIKHLQENERCSDQSQKRTAQQIEAIYTSGQNILVSASAGSGKTFVMVERILDKILRGVSIDRLFISTFTVKAATELRERIENKLYSQIAQTTDFQMKVYLTEQLQSLGQADIGTMDAFAQKVVSRYGYSIGISSQFRIMQDKAEQDVLKQEVFSKLFSEFMNQKEAPVFRALVKNFSGNCKDTSAFRELVYTCYSFSQSTENPKIWLQENFLSAAKTYQRLEDIPDHDIELLLLAMQDTANQLRDVTDMEDYGQLTKAGSRSAKYTKHLTIIEKLSDWVRDFKCLYGKAGLDRLIRDVTGLIPSGNDVTVSKVKYPVFKTLHQKLKQFRHLETILMYQKDCFPLLEQLQDFVLAFSEAYLAVKIQESAFEFSDITHFAIKILEENTDIRQSYQQHYHEVMVDEYQDNNHMQERLLTLLSNGHNRFMVGDIKQSIYRFRQADPQIFNQKFRDYQKKTEQGKVILLKENFRSQSEVLNVSNAVFSHLMDESVGDVLYDEQHQLIAGSHAQTVPYLDRRAQLLLYNSDKDDGNAPSDSEGISFSEVTIVAKEIIKLHNDKGVPFEDITLLVSSRTRNDIISHTFNQYGIPIVTDGGQQNYLKSVEVMVMLDTLRTINNPRNDYALVALLRSPMFAFDEDDLARIALQKDNELDKDCLYDKIQRAVIGRGAHPELIHDTLLGKLNIFLKTLKSWRRYAKLGSLYDLIWKIFNDRFYFDFVASQAKAEQAQANLYALALRANQFEKSGYKGLYCFIKMIDKVLETQNDLADVEVAAPKQAVNLMTIHKSKGLQFPYVFILNCDKRFSMTDIHKSFILNRQHGIGIKYLADIKGLLGETTLNSVKVSMETLPYQLNKQELRLATLSEQMRLLYVAMTRAEKKVYFIGKASKSKSQDITDPKKLGKLLPLALREQLLTFQDWLLAIADVFSTEDLYFDVRFIEDSDLTQESVGRLQTPQLLNPDDLKDNRQSETIARALDMLEAVSQLNANYEAAIHLPTVRTPSQLKAAYEPLLEPIGVDIIEKSSRSLSDFTLPHFSKKVKVEASHIGSALHQLMQVLPLSKPINQQTLLDALREIDSNEEVKTALDLKKIESFFCDTSLGQFFQTYQKHLYREAPFAILKVDPISQEEYVLRGIIDAYFLFDDHIVLVDYKTDKYKQPIELKKRYQQQLELYAEALTQTYKLPVTKRYLVLMGGGKPEIVEV.

Residues 39-495 form the UvrD-like helicase ATP-binding domain; sequence QKRTAQQIEA…ILLKENFRSQ (457 aa). Residue 60–67 coordinates ATP; that stretch reads ASAGSGKT. In terms of domain architecture, UvrD-like helicase C-terminal spans 524-810; sequence QLIAGSHAQT…NLMTIHKSKG (287 aa).

The protein belongs to the helicase family. AddA subfamily. As to quaternary structure, heterodimer of AddA and AddB/RexB. It depends on Mg(2+) as a cofactor.

The catalysed reaction is Couples ATP hydrolysis with the unwinding of duplex DNA by translocating in the 3'-5' direction.. It catalyses the reaction ATP + H2O = ADP + phosphate + H(+). In terms of biological role, the heterodimer acts as both an ATP-dependent DNA helicase and an ATP-dependent, dual-direction single-stranded exonuclease. Recognizes the chi site generating a DNA molecule suitable for the initiation of homologous recombination. The AddA nuclease domain is required for chi fragment generation; this subunit has the helicase and 3' -&gt; 5' nuclease activities. This Streptococcus pyogenes serotype M12 (strain MGAS9429) protein is ATP-dependent helicase/nuclease subunit A.